The sequence spans 96 residues: Keratin-associated protein 12-1 (96 aa).

Repeat copies occupy residues 10 to 14 (CQPAC), 15 to 19 (CAPSP), 24 to 28 (CYIPV), 30 to 34 (CQSSV), 35 to 39 (CVPVS), 45 to 49 (CVPVR), 50 to 54 (CQSSV), 55 to 59 (CVPVS), 60 to 64 (CRPVV), 70 to 74 (CQSSG), 75 to 79 (CCQPS), 80 to 84 (CTSVL), 85 to 89 (CRPIS), and 90 to 94 (CSTPS). The tract at residues 10–94 (CQPACCAPSP…CRPISCSTPS (85 aa)) is 14 X 5 AA approximate repeats.

The protein belongs to the KRTAP type 12 family. As to quaternary structure, interacts with hair keratins. As to expression, restricted to a narrow region of the hair fiber cuticle, lying approximately 20 cell layers above the apex of the dermal papilla of the hair root; not detected in any other tissues.

Its function is as follows. In the hair cortex, hair keratin intermediate filaments are embedded in an interfilamentous matrix, consisting of hair keratin-associated proteins (KRTAP), which are essential for the formation of a rigid and resistant hair shaft through their extensive disulfide bond cross-linking with abundant cysteine residues of hair keratins. The matrix proteins include the high-sulfur and high-glycine-tyrosine keratins. In Homo sapiens (Human), this protein is Keratin-associated protein 12-1 (KRTAP12-1).